The sequence spans 255 residues: Shieldin complex subunit 3 (255 aa).

The sufficient for interaction with MAD2L2 stretch occupies residues Gln33–Ser88. Residues Gln116–Arg135 are disordered.

As to quaternary structure, component of the shieldin complex, consisting of SHLD1, SHLD2, SHLD3 and MAD2L2/REV7. Within the complex, SHLD2 forms a scaffold which interacts with a SHLD3-MAD2L2 subcomplex via its N-terminus, and with SHLD1 via its C-terminus. Interacts with ASTE1.

The protein localises to the chromosome. Its function is as follows. Component of the shieldin complex, which plays an important role in repair of DNA double-stranded breaks (DSBs). During G1 and S phase of the cell cycle, the complex functions downstream of TP53BP1 to promote non-homologous end joining (NHEJ) and suppress DNA end resection. Mediates various NHEJ-dependent processes including immunoglobulin class-switch recombination, and fusion of unprotected telomeres. This Mus musculus (Mouse) protein is Shieldin complex subunit 3.